Consider the following 3890-residue polypeptide: Extracellular matrix-binding protein EbhB (3890 aa).

Positions 1 to 39 are cleaved as a signal peptide; that stretch reads MNYRDKIQKFSIRKYTVGTFSTVIATLVFLGFNTSQAHA. Residues 41 to 59 are compositionally biased toward polar residues; it reads ETNQPASVVKQKQQSNNEQ. Disordered regions lie at residues 41 to 152, 249 to 277, 1347 to 1372, and 2418 to 2438; these read ETNQ…GNDN, MPQR…PRSV, NEKA…NATT, and TITP…TLTA. The segment covering 65–78 has biased composition (low complexity); that stretch reads SQVQNSQNSQNSQS. Over residues 79-117 the composition is skewed to polar residues; it reads LSATHENEQPNNSQANLVNQKVAQSSTTNDEQPASQNVN. Residues 130-140 are compositionally biased toward basic and acidic residues; that stretch reads PDKEESKHKQN. Polar residues-rich tracts occupy residues 141–151, 250–266, 1360–1372, and 2427–2438; these read ESQSANKNGND, PQRQ…QTRS, YRTT…NATT, and HSVSSNPSTLTA. FIVAR domains are found at residues 2524–2580, 2610–2666, 2687–2750, 2780–2836, 2864–2919, 2947–3002, 3030–3085, 3154–3212, 3280–3339, 3407–3465, 3533–3591, 3659–3717, and 3785–3843; these read AKNH…VSDA, SKNN…ISDE, DTHA…VQSA, AKTK…IAAE, AKTQ…IRQN, AKNQ…INTN, AKTQ…INDK, AMTK…VNQK, AMTG…VNNA, AMGN…VNRA, AMGN…VTEA, AMNT…ITQK, and AMAN…VEAA.

The polypeptide is Extracellular matrix-binding protein EbhB (ebhB) (Staphylococcus aureus (strain N315)).